A 77-amino-acid chain; its full sequence is Probable Fe(2+)-trafficking protein (77 aa).

Belongs to the Fe(2+)-trafficking protein family.

Could be a mediator in iron transactions between iron acquisition and iron-requiring processes, such as synthesis and/or repair of Fe-S clusters in biosynthetic enzymes. This chain is Probable Fe(2+)-trafficking protein, found in Baumannia cicadellinicola subsp. Homalodisca coagulata.